Here is a 369-residue protein sequence, read N- to C-terminus: 2-aminoethylphosphonate--pyruvate transaminase (369 aa).

K193 bears the N6-(pyridoxal phosphate)lysine mark.

This sequence belongs to the class-V pyridoxal-phosphate-dependent aminotransferase family. PhnW subfamily. In terms of assembly, homodimer. Pyridoxal 5'-phosphate serves as cofactor.

It catalyses the reaction (2-aminoethyl)phosphonate + pyruvate = phosphonoacetaldehyde + L-alanine. Functionally, involved in phosphonate degradation. In Pseudomonas fluorescens (strain ATCC BAA-477 / NRRL B-23932 / Pf-5), this protein is 2-aminoethylphosphonate--pyruvate transaminase.